The primary structure comprises 66 residues: Phylloseptin-H8 (66 aa).

The first 22 residues, 1–22, serve as a signal peptide directing secretion; that stretch reads MAFLKKSLFLVLFLGLVSLSIC. Residues 23 to 44 constitute a propeptide that is removed on maturation; that stretch reads EEEKRETEEEENDQEEDDKSEE. Positions 25–44 are disordered; that stretch reads EKRETEEEENDQEEDDKSEE. The segment covering 30–41 has biased composition (acidic residues); it reads EEEENDQEEDDK. A Leucine amide modification is found at Leu-65.

As to expression, expressed by the skin glands.

It localises to the secreted. In terms of biological role, has antimicrobial activity. The sequence is that of Phylloseptin-H8 from Pithecopus hypochondrialis (Orange-legged leaf frog).